A 331-amino-acid polypeptide reads, in one-letter code: Ketol-acid reductoisomerase (NADP(+)) (331 aa).

The KARI N-terminal Rossmann domain maps to M1–T182. NADP(+)-binding positions include Y25–Q28, S51, S53, and D83–Q86. H108 is a catalytic residue. Residue G134 participates in NADP(+) binding. The 146-residue stretch at N183–L328 folds into the KARI C-terminal knotted domain. Mg(2+) contacts are provided by D191, E195, E227, and E231. Position 252 (S252) interacts with substrate.

Belongs to the ketol-acid reductoisomerase family. It depends on Mg(2+) as a cofactor.

It carries out the reaction (2R)-2,3-dihydroxy-3-methylbutanoate + NADP(+) = (2S)-2-acetolactate + NADPH + H(+). It catalyses the reaction (2R,3R)-2,3-dihydroxy-3-methylpentanoate + NADP(+) = (S)-2-ethyl-2-hydroxy-3-oxobutanoate + NADPH + H(+). It participates in amino-acid biosynthesis; L-isoleucine biosynthesis; L-isoleucine from 2-oxobutanoate: step 2/4. Its pathway is amino-acid biosynthesis; L-valine biosynthesis; L-valine from pyruvate: step 2/4. Involved in the biosynthesis of branched-chain amino acids (BCAA). Catalyzes an alkyl-migration followed by a ketol-acid reduction of (S)-2-acetolactate (S2AL) to yield (R)-2,3-dihydroxy-isovalerate. In the isomerase reaction, S2AL is rearranged via a Mg-dependent methyl migration to produce 3-hydroxy-3-methyl-2-ketobutyrate (HMKB). In the reductase reaction, this 2-ketoacid undergoes a metal-dependent reduction by NADPH to yield (R)-2,3-dihydroxy-isovalerate. The protein is Ketol-acid reductoisomerase (NADP(+)) of Synechococcus sp. (strain RCC307).